A 418-amino-acid polypeptide reads, in one-letter code: Vasopressin V1a receptor (418 aa).

Over residues 1–15 (MRFSGSPSPGPSNSS) the composition is skewed to low complexity. The tract at residues 1 to 20 (MRFSGSPSPGPSNSSRWWPL) is disordered. Residues 1–51 (MRFSGSPSPGPSNSSRWWPLDAGDANTSGDLAGLGEDGGPQADTRNEELAK) are Extracellular-facing. N-linked (GlcNAc...) asparagine glycosylation is found at asparagine 13 and asparagine 26. A helical membrane pass occupies residues 52–75 (LEIAVLAVIFVVAVLGNSSVLLAL). Residues 76 to 87 (HRTPRKTSRMHL) are Cytoplasmic-facing. A helical transmembrane segment spans residues 88–109 (FIRHLSLADLAVAFFQVLPQLG). Over 110-124 (WDITYRFRGPDGLCR) the chain is Extracellular. A disulfide bond links cysteine 123 and cysteine 202. Residues 125 to 146 (VVKHMQVFAMFASAYMLVVMTA) traverse the membrane as a helical segment. Over 147 to 167 (DRYIAVCHPLKTLQQPARRSR) the chain is Cytoplasmic. The helical transmembrane segment at 168–189 (LMIAAAWVLSFVLSTPQYFVFS) threads the bilayer. Over 190–217 (MVEVSNVTKTYDCWANFIHPWGLPAYVT) the chain is Extracellular. The N-linked (GlcNAc...) asparagine glycan is linked to asparagine 195. The helical transmembrane segment at 218–238 (WMTGSVFVAPVVILGTCYGFI) threads the bilayer. The Cytoplasmic segment spans residues 239 to 293 (CYHIWRKVRGKTAGRQGGPAEGAGESALYRGVLHARCVSSVKTISRAKIRTVKMT). A helical membrane pass occupies residues 294–313 (FVIVTAYIVCWAPFFIIQMW). Residues 314–331 (SAWDKNFSWVESENPATA) lie on the Extracellular side of the membrane. Residue asparagine 319 is glycosylated (N-linked (GlcNAc...) asparagine). Residues 332–351 (IPALLASLNSCCNPWIYMFF) traverse the membrane as a helical segment. Residues 352 to 418 (SGHLLQDCAQ…KSIKFIPVST (67 aa)) are Cytoplasmic-facing. 2 S-palmitoyl cysteine lipidation sites follow: cysteine 365 and cysteine 366. Positions 377 to 418 (GSDSMSRRQTSFTNNRSPTNSMGTWKDSPKSSKSIKFIPVST) are disordered. Residues 383 to 399 (RRQTSFTNNRSPTNSMG) are compositionally biased toward polar residues. A Phosphoserine modification is found at serine 404.

The protein belongs to the G-protein coupled receptor 1 family. Vasopressin/oxytocin receptor subfamily.

It is found in the cell membrane. Receptor for arginine vasopressin. The activity of this receptor is mediated by G proteins which activate a phosphatidyl-inositol-calcium second messenger system. This chain is Vasopressin V1a receptor (AVPR1A), found in Ovis aries (Sheep).